A 90-amino-acid polypeptide reads, in one-letter code: UPF0297 protein lwe1516 (90 aa).

Belongs to the UPF0297 family.

This Listeria welshimeri serovar 6b (strain ATCC 35897 / DSM 20650 / CCUG 15529 / CIP 8149 / NCTC 11857 / SLCC 5334 / V8) protein is UPF0297 protein lwe1516.